The chain runs to 378 residues: Chaperone protein DnaJ (378 aa).

Residues 5–69 enclose the J domain; the sequence is EYYDRLGVSK…QKRAAYDQYG (65 aa). The CR-type zinc-finger motif lies at 134–216; the sequence is GVEKEVSYNR…CHGTGHEKQA (83 aa). Zn(2+)-binding residues include cysteine 147, cysteine 150, cysteine 164, cysteine 167, cysteine 190, cysteine 193, cysteine 204, and cysteine 207. CXXCXGXG motif repeat units lie at residues 147–154, 164–171, 190–197, and 204–211; these read CGTCLGSG, CRKCHGSG, CDICHGSG, and CQTCHGTG.

Belongs to the DnaJ family. As to quaternary structure, homodimer. Zn(2+) serves as cofactor.

It is found in the cytoplasm. Participates actively in the response to hyperosmotic and heat shock by preventing the aggregation of stress-denatured proteins and by disaggregating proteins, also in an autonomous, DnaK-independent fashion. Unfolded proteins bind initially to DnaJ; upon interaction with the DnaJ-bound protein, DnaK hydrolyzes its bound ATP, resulting in the formation of a stable complex. GrpE releases ADP from DnaK; ATP binding to DnaK triggers the release of the substrate protein, thus completing the reaction cycle. Several rounds of ATP-dependent interactions between DnaJ, DnaK and GrpE are required for fully efficient folding. Also involved, together with DnaK and GrpE, in the DNA replication of plasmids through activation of initiation proteins. This Streptococcus pyogenes protein is Chaperone protein DnaJ.